Here is a 338-residue protein sequence, read N- to C-terminus: Serpentine receptor class alpha-32 (338 aa).

Transmembrane regions (helical) follow at residues 30–50 (VYVIYIDLVLILALFLSIHAI), 63–83 (ITHLLIASLVYGNVHNASYTI), 120–140 (RFLFIAIELALNVDRIIVILF), 152–172 (GEILNILAVILSFALGCLLHL), 199–219 (LTSYTILSACCAALDFLMMWY), 249–269 (LNSLLQLFVTSIYAISMFVLA), and 289–309 (TTPYSTLLVPIQIKVFIQWIG).

The protein belongs to the nematode receptor-like protein sra family.

It localises to the membrane. The sequence is that of Serpentine receptor class alpha-32 (sra-32) from Caenorhabditis elegans.